The following is a 346-amino-acid chain: Uroporphyrinogen decarboxylase (346 aa).

Substrate is bound by residues 23–27 (RQAGR), Asp72, Tyr155, Ser209, and His322.

It belongs to the uroporphyrinogen decarboxylase family. Homodimer.

Its subcellular location is the cytoplasm. The enzyme catalyses uroporphyrinogen III + 4 H(+) = coproporphyrinogen III + 4 CO2. Its pathway is porphyrin-containing compound metabolism; protoporphyrin-IX biosynthesis; coproporphyrinogen-III from 5-aminolevulinate: step 4/4. Catalyzes the decarboxylation of four acetate groups of uroporphyrinogen-III to yield coproporphyrinogen-III. This Anaeromyxobacter sp. (strain Fw109-5) protein is Uroporphyrinogen decarboxylase.